Consider the following 587-residue polypeptide: Kelch-like ECH-associated protein 1B (587 aa).

In terms of domain architecture, BTB spans C44–E117. A BACK domain is found at I153–L253. Kelch repeat units follow at residues L292 to G337, L338 to G388, M389 to R435, L436 to N482, I484 to G529, and R530 to E576.

The protein belongs to the KEAP1 family. As to quaternary structure, homodimer and heterodimer; heterodimerizes with keap1a. Component of the BCR(KEAP1) E3 ubiquitin ligase complex, at least composed of 2 molecules of cul3, 2 molecules of keap1 (keap1a and/or keap1b), and rbx1. Interacts with nfe2l2/nrf2; the interaction is direct. Non-enzymatic covalent modifications of reactive cysteines by electrophile metabolites inactivate the BCR(KEAP1) complex. As to expression, widely expressed.

It is found in the cytoplasm. Its subcellular location is the nucleus. It participates in protein modification; protein ubiquitination. Its activity is regulated as follows. Ubiquitin ligase activity of the BCR(KEAP1) complex is inhibited by oxidative stress and electrophile metabolites such as sulforaphane. Electrophile metabolites react with reactive cysteine residues in keap1 and trigger non-enzymatic covalent modifications of these cysteine residues, leading to inactivate the ubiquitin ligase activity of the BCR(KEAP1) complex. Substrate-specific adapter of a BCR (BTB-CUL3-RBX1) E3 ubiquitin ligase complex that regulates the response to oxidative stress by targeting nfe2l2/nrf2 for ubiquitination. Keap1 acts as a key sensor of oxidative and electrophilic stress: in normal conditions, the BCR(KEAP1) complex mediates ubiquitination and degradation of nfe2l2/nrf2, a transcription factor regulating expression of many cytoprotective genes. In response to oxidative stress, different electrophile metabolites trigger non-enzymatic covalent modifications of highly reactive cysteine residues in KEAP1, leading to inactivate the ubiquitin ligase activity of the BCR(KEAP1) complex, promoting nfe2l2/nrf2 nuclear accumulation and expression of phase II detoxifying enzymes. In Danio rerio (Zebrafish), this protein is Kelch-like ECH-associated protein 1B.